A 268-amino-acid chain; its full sequence is Large ribosomal subunit protein uL4 (268 aa).

The protein belongs to the universal ribosomal protein uL4 family. As to quaternary structure, part of the 50S ribosomal subunit.

In terms of biological role, one of the primary rRNA binding proteins, this protein initially binds near the 5'-end of the 23S rRNA. It is important during the early stages of 50S assembly. It makes multiple contacts with different domains of the 23S rRNA in the assembled 50S subunit and ribosome. Forms part of the polypeptide exit tunnel. This chain is Large ribosomal subunit protein uL4, found in Nanoarchaeum equitans (strain Kin4-M).